The sequence spans 317 residues: Vacuolar arginine/histidine antiporter YPQ2 (317 aa).

The Vacuolar segment spans residues 1–13 (MSCSNGIWPTVSN). One can recognise a PQ-loop 1 domain in the interval 8 to 71 (WPTVSNLCGS…AKLTGQLLFQ (64 aa)). A helical membrane pass occupies residues 14–34 (LCGSLSFFTSVISLFPQIIET). Residues 35–39 (YRDKS) lie on the Cytoplasmic side of the membrane. Residues 40 to 62 (VDGLSPYFLLAWLCGDITSLIGA) form a helical membrane-spanning segment. Topologically, residues 63-71 (KLTGQLLFQ) are vacuolar. A helical transmembrane segment spans residues 72–94 (ILLAIYFLLNDSFVCGQYYYYGV). Residues 95-143 (LHENKLATVGHEPKPLLPELVENGELLREEEDMIQGGSSAESPRSSRRR) lie on the Cytoplasmic side of the membrane. Serine 136 carries the phosphoserine modification. Residues 144–164 (SAITAALAIAHTISTASAYPL) form a helical membrane-spanning segment. Topologically, residues 165–184 (NVGSTQSQVGPPGDGKNSQL) are vacuolar. A helical membrane pass occupies residues 185 to 205 (GTILSWIGASFYVGARIPQLI). A PQ-loop 2 domain is found at 185 to 247 (GTILSWIGAS…SCRFLDNQNK (63 aa)). Over 206 to 215 (KNYNRKSTDG) the chain is Cytoplasmic. A helical membrane pass occupies residues 216-236 (LSPFLFATTLLCNITYNLSIF). Over 237-249 (TSCRFLDNQNKRE) the chain is Vacuolar. Residues 250-270 (FIVNELPFIFGSAGTIAFDLI) traverse the membrane as a helical segment. The Cytoplasmic segment spans residues 271–317 (YFYQYYILYATDMQLRELERELYSPEEDSAAQLVTERTSLLSGETQT).

Belongs to the laat-1 family.

It localises to the vacuole membrane. It carries out the reaction L-histidine(out) + L-arginine(in) = L-histidine(in) + L-arginine(out). Functionally, amino acid transporter that moves arginine across the vacuolar membrane. Active during nitrogen starvation when it exports stored vacuolar arginine to the cytosol, for use as a nitrogen source. Has been shown to function as an arginine/histidine antiporter when substrate is present on both sides of the membrane, but may also function as a uniporter. The chain is Vacuolar arginine/histidine antiporter YPQ2 (YPQ2) from Saccharomyces cerevisiae (strain ATCC 204508 / S288c) (Baker's yeast).